The chain runs to 103 residues: Large ribosomal subunit protein bL21 (103 aa).

This sequence belongs to the bacterial ribosomal protein bL21 family. In terms of assembly, part of the 50S ribosomal subunit. Contacts protein L20.

This protein binds to 23S rRNA in the presence of protein L20. The chain is Large ribosomal subunit protein bL21 from Marinobacter nauticus (strain ATCC 700491 / DSM 11845 / VT8) (Marinobacter aquaeolei).